A 189-amino-acid polypeptide reads, in one-letter code: Probable nicotinate-nucleotide adenylyltransferase (189 aa).

This sequence belongs to the NadD family.

The enzyme catalyses nicotinate beta-D-ribonucleotide + ATP + H(+) = deamido-NAD(+) + diphosphate. The protein operates within cofactor biosynthesis; NAD(+) biosynthesis; deamido-NAD(+) from nicotinate D-ribonucleotide: step 1/1. Its function is as follows. Catalyzes the reversible adenylation of nicotinate mononucleotide (NaMN) to nicotinic acid adenine dinucleotide (NaAD). This is Probable nicotinate-nucleotide adenylyltransferase from Staphylococcus aureus (strain MRSA252).